We begin with the raw amino-acid sequence, 555 residues long: Serine/threonine-protein kinase Nek4 (555 aa).

Residues 4 to 258 (YEVLEQIGKG…ANELLNHPHL (255 aa)) enclose the Protein kinase domain. Residues 10–18 (IGKGSFGSA) and Lys-33 each bind ATP. Asp-129 functions as the Proton acceptor in the catalytic mechanism. Disordered stretches follow at residues 288-328 (LKER…MFNG), 346-372 (QRQEEAKKQSGAARTPRVAGTSAKAST), and 443-477 (NRETASRREVARHSFSSPPCPPHGEDNSNGSITKD). A compositionally biased stretch (polar residues) spans 304–320 (PSVSDTEAGSVSSSGKA).

The protein belongs to the protein kinase superfamily. NEK Ser/Thr protein kinase family. NIMA subfamily.

The enzyme catalyses L-seryl-[protein] + ATP = O-phospho-L-seryl-[protein] + ADP + H(+). It carries out the reaction L-threonyl-[protein] + ATP = O-phospho-L-threonyl-[protein] + ADP + H(+). Its function is as follows. May be involved in plant development processes. The chain is Serine/threonine-protein kinase Nek4 (NEK4) from Arabidopsis thaliana (Mouse-ear cress).